The following is a 264-amino-acid chain: Eukaryotic translation initiation factor 6 (264 aa).

The protein belongs to the eIF-6 family. Monomer. Associates with the 60S ribosomal subunit.

The protein localises to the cytoplasm. It is found in the nucleus. Its subcellular location is the nucleolus. Functionally, binds to the 60S ribosomal subunit and prevents its association with the 40S ribosomal subunit to form the 80S initiation complex in the cytoplasm. May also be involved in ribosome biogenesis. This is Eukaryotic translation initiation factor 6 from Toxoplasma gondii (strain ATCC 50861 / VEG).